The following is a 519-amino-acid chain: Serine/threonine-protein kinase RIO3 (519 aa).

Phosphoserine occurs at positions 8, 112, 125, 127, and 128. Residues 122–159 (FEDSDSSEDEVDWQDTRDDPYRPAKPIPTPKKGFIGKG) are disordered. Residues 124–134 (DSDSSEDEVDW) show a composition bias toward acidic residues. The region spanning 251–519 (ETITGCISTG…DGSPPVLSAD (269 aa)) is the Protein kinase domain. ATP is bound by residues 257–265 (ISTGKESVV) and K290. D406 acts as the Proton acceptor in catalysis. Position 512 is a phosphoserine (S512).

The protein belongs to the protein kinase superfamily. RIO-type Ser/Thr kinase family. As to quaternary structure, interacts with CASP10. Interacts with IRF3; RIOK3 probably mediates the interaction of TBK1 with IRF3. Associated with 40S pre-ribosomal particles. The cofactor is Mg(2+). Autophosphorylated (in vitro).

It is found in the cytoplasm. The catalysed reaction is L-seryl-[protein] + ATP = O-phospho-L-seryl-[protein] + ADP + H(+). It carries out the reaction L-threonyl-[protein] + ATP = O-phospho-L-threonyl-[protein] + ADP + H(+). Involved in regulation of type I interferon (IFN)-dependent immune response which plays a critical role in the innate immune response against DNA and RNA viruses. May act as an adapter protein essential for the recruitment of TBK1 to IRF3. Phosphorylates IFIH1 on 'Ser-828' interfering with IFIH1 filament assembly on long dsRNA and resulting in attenuated IFIH1-signaling. Can inhibit CASP10 isoform 7-mediated activation of the NF-kappaB signaling pathway. May play a role in the biogenesis of the 40S ribosomal subunit. Involved in the processing of 21S pre-rRNA to the mature 18S rRNA. This chain is Serine/threonine-protein kinase RIO3 (Riok3), found in Mus musculus (Mouse).